A 343-amino-acid polypeptide reads, in one-letter code: Methionine import ATP-binding protein MetN (343 aa).

The ABC transporter domain occupies I2 to I241. Position 40–46 (S40–T46) interacts with ATP. Positions C265–V343 are C2 domain. L-methionine contacts are provided by residues V278–L283 and N295–I296.

It belongs to the ABC transporter superfamily. Methionine importer (TC 3.A.1.24) family. In terms of assembly, the complex is composed of two ATP-binding proteins (MetN), two transmembrane proteins (MetI) and a solute-binding protein (MetQ).

It is found in the cell inner membrane. It catalyses the reaction L-methionine(out) + ATP + H2O = L-methionine(in) + ADP + phosphate + H(+). The catalysed reaction is D-methionine(out) + ATP + H2O = D-methionine(in) + ADP + phosphate + H(+). ATPase activity is inhibited by intracellular L-methionine. Binding of methionine to the dimerized C-terminal regulatory domain stabilizes an inward-facing, ATPase-inactive conformation of the transporter, and as a consequence, the rate of ATP hydrolysis decreases. ADP is a competitive inhibitor. In terms of biological role, part of the ABC transporter complex MetNIQ involved in methionine import. Responsible for energy coupling to the transport system. It has also been shown to be involved in formyl-L-methionine transport. This chain is Methionine import ATP-binding protein MetN, found in Escherichia coli (strain K12).